Consider the following 282-residue polypeptide: 4-hydroxy-tetrahydrodipicolinate reductase (282 aa).

Residues 14-19 and 115-117 each bind NAD(+); these read GAMGRM and GTT. His-171 (proton donor/acceptor) is an active-site residue. A (S)-2,3,4,5-tetrahydrodipicolinate-binding site is contributed by His-172. The Proton donor role is filled by Lys-175. Position 181–182 (181–182) interacts with (S)-2,3,4,5-tetrahydrodipicolinate; that stretch reads GT.

It belongs to the DapB family.

It localises to the cytoplasm. The enzyme catalyses (S)-2,3,4,5-tetrahydrodipicolinate + NAD(+) + H2O = (2S,4S)-4-hydroxy-2,3,4,5-tetrahydrodipicolinate + NADH + H(+). It catalyses the reaction (S)-2,3,4,5-tetrahydrodipicolinate + NADP(+) + H2O = (2S,4S)-4-hydroxy-2,3,4,5-tetrahydrodipicolinate + NADPH + H(+). Its pathway is amino-acid biosynthesis; L-lysine biosynthesis via DAP pathway; (S)-tetrahydrodipicolinate from L-aspartate: step 4/4. Functionally, catalyzes the conversion of 4-hydroxy-tetrahydrodipicolinate (HTPA) to tetrahydrodipicolinate. This Prochlorococcus marinus (strain NATL2A) protein is 4-hydroxy-tetrahydrodipicolinate reductase.